A 947-amino-acid chain; its full sequence is MNNKKTATNRKGMIPNRLNKFSIRKYSVGTASILVGTTLIFGLSGHEAKAAEHTNGELNQSKNETTAPSENKTTKKVDSRQLKDNTQTATADQPKVTMSDSATVKETSSNMQSPQNATANQSTTKTSNVTTNDKSSTTYSNETDKSNLTQAKDVSTTPKTTTIKPRTLNRMAVNTVAAPQQGTNVNDKVHFSNIDIAIDKGHVNQTTGKTEFWATSSDVLKLKANYTIDDSVKEGDIFTFKYGQYFRPGSVRLPSQTQNLYNAQGNIIAKGIYDSTTNTTTYTFTNYVDQYTNVRGSFEQVAFAKRKNATTDKTAYKMEVTLGNDTYSEEIIVDYGNKKAQPLISSTNYINNEDLSRNMTAYVNQPKNTYTKQTFVTNLTGYKFNPNAKNFKIYEVTDQNQFVDSFTPDTSKLKDVTDQFDVIYSNDNKTATVDLMKGQTSSNKQYIIQQVAYPDNSSTDNGKIDYTLDTDKTKYSWSNSYSNVNGSSTANGDQKKYNLGDYVWEDTNKDGKQDANEKGIKGVYVILKDSNGKELDRTTTDENGKYQFTGLSNGTYSVEFSTPAGYTPTTANVGTDDAVDSDGLTTTGVIKDADNMTLDSGFYKTPKYSLGDYVWYDSNKDGKQDSTEKGIKGVKVTLQNEKGEVIGTTETDENGKYRFDNLDSGKYKVIFEKPAGLTQTGTNTTEDDKDADGGEVDVTITDHDDFTLDNGYYEEETSDSDSDSDSDSDSDSDSDSDSDSDSDSDSDSDSDSDSDSDSDSDSDSDSDSDSDSDSDSDSDSDSDSDSDSDSDSDSDSDSDSDSDSDSDSDSDSDSDSDSDSDSDSDSDSDSDSDSDSDSDSDSDSDSDSDSDSDSDSDSDSDSDSDSDSDSDSDSDNDSDSDSDSDSDAGKHTPAKPMSTVKDQHKTAKALPETGSENNNSNNGTLFGGLFAALGSLLLFGRRKKQNK.

The N-terminal stretch at 1–50 (MNNKKTATNRKGMIPNRLNKFSIRKYSVGTASILVGTTLIFGLSGHEAKA) is a signal peptide. Positions 51 to 164 (AEHTNGELNQ…STTPKTTTIK (114 aa)) are disordered. Residues 51-495 (AEHTNGELNQ…GSSTANGDQK (445 aa)) form a ligand binding A region region. Residues 56–71 (GELNQSKNETTAPSEN) show a composition bias toward polar residues. Basic and acidic residues predominate over residues 72 to 83 (KTTKKVDSRQLK). Polar residues predominate over residues 84 to 155 (DNTQTATADQ…SNLTQAKDVS (72 aa)). CNA-B domains are found at residues 496-606 (KYNL…YKTP) and 607-717 (KYSL…EEET). Positions 678–927 (TQTGTNTTED…NNSNNGTLFG (250 aa)) are disordered. 2 stretches are compositionally biased toward acidic residues: residues 685-695 (TEDDKDADGGE) and 712-886 (YYEE…DSDS). The short motif at 910–914 (LPETG) is the LPXTG sorting signal element. The span at 912 to 927 (ETGSENNNSNNGTLFG) shows a compositional bias: low complexity. T913 is modified (pentaglycyl murein peptidoglycan amidated threonine). Residues 914–947 (GSENNNSNNGTLFGGLFAALGSLLLFGRRKKQNK) constitute a propeptide, removed by sortase.

Belongs to the serine-aspartate repeat-containing protein (SDr) family. In terms of assembly, homodimerizes; via N2-Domain. Interacts with host NRXN1; this interaction mediates bacterial attachment to host cells.

The protein resides in the secreted. It is found in the cell wall. Its function is as follows. Cell surface-associated calcium-binding protein which plays an important role in adhesion and pathogenesis. Mediates interactions with components of the extracellular matrix such as host NRXN1 to promote bacterial adhesion. The chain is Serine-aspartate repeat-containing protein C (sdrC) from Staphylococcus aureus (strain USA300).